A 203-amino-acid polypeptide reads, in one-letter code: Large ribosomal subunit protein bL25 (203 aa).

It belongs to the bacterial ribosomal protein bL25 family. CTC subfamily. As to quaternary structure, part of the 50S ribosomal subunit; part of the 5S rRNA/L5/L18/L25 subcomplex. Contacts the 5S rRNA. Binds to the 5S rRNA independently of L5 and L18.

Its function is as follows. This is one of the proteins that binds to the 5S RNA in the ribosome where it forms part of the central protuberance. This Rickettsia rickettsii (strain Iowa) protein is Large ribosomal subunit protein bL25.